The primary structure comprises 340 residues: N-acetyl-gamma-glutamyl-phosphate reductase (340 aa).

The active site involves cysteine 148.

Belongs to the NAGSA dehydrogenase family. Type 1 subfamily.

The protein resides in the cytoplasm. It carries out the reaction N-acetyl-L-glutamate 5-semialdehyde + phosphate + NADP(+) = N-acetyl-L-glutamyl 5-phosphate + NADPH + H(+). It functions in the pathway amino-acid biosynthesis; L-arginine biosynthesis; N(2)-acetyl-L-ornithine from L-glutamate: step 3/4. Functionally, catalyzes the NADPH-dependent reduction of N-acetyl-5-glutamyl phosphate to yield N-acetyl-L-glutamate 5-semialdehyde. This is N-acetyl-gamma-glutamyl-phosphate reductase from Methanosarcina mazei (strain ATCC BAA-159 / DSM 3647 / Goe1 / Go1 / JCM 11833 / OCM 88) (Methanosarcina frisia).